We begin with the raw amino-acid sequence, 328 residues long: Olfactory receptor 13A1 (328 aa).

The Extracellular segment spans residues 1-43; that stretch reads MKLWMESHLIVPETRPSPRMMSNQTLVTEFILQGFSEHPEYRV. N-linked (GlcNAc...) asparagine glycosylation is present at asparagine 23. Residues 44 to 64 traverse the membrane as a helical segment; it reads FLFSCFLFLYSGALTGNVLIT. The Cytoplasmic portion of the chain corresponds to 65–72; that stretch reads LAITFNPG. Residues 73–93 traverse the membrane as a helical segment; that stretch reads LHAPMYFFLLNLATMDIICTS. Residues 94–117 are Extracellular-facing; it reads SIMPKALASLVSEESSISYGGCMA. The cysteines at positions 115 and 207 are disulfide-linked. A helical transmembrane segment spans residues 118 to 138; sequence QLYFLTWAASSELLLLTVMAY. The Cytoplasmic segment spans residues 139-157; that stretch reads DRYAAICHPLHYSSMMSKV. A helical transmembrane segment spans residues 158-178; that stretch reads FCSGLATAVWLLCAVNTAIHT. Residues 179-215 are Extracellular-facing; the sequence is GLMLRLDFCGPNVIIHFFCEVPPLLLLSCSSTYVNGV. The chain crosses the membrane as a helical span at residues 216–235; that stretch reads MIVLADAFYGIVNFLMTIAS. Residues 236–255 lie on the Cytoplasmic side of the membrane; it reads YGFIVSSILKVKTAWGRQKA. The chain crosses the membrane as a helical span at residues 256 to 276; sequence FSTCSSHLTVVCMYYTAVFYA. The Extracellular portion of the chain corresponds to 277 to 289; that stretch reads YISPVSGYSAGKS. A helical transmembrane segment spans residues 290–310; it reads KLAGLLYTVLSPTLNPLIYTL. The Cytoplasmic segment spans residues 311–328; the sequence is RNKEVKAALRKLFPFFRN.

Belongs to the G-protein coupled receptor 1 family.

It localises to the cell membrane. Its function is as follows. Odorant receptor. The sequence is that of Olfactory receptor 13A1 (OR13A1) from Homo sapiens (Human).